Consider the following 484-residue polypeptide: Glutamyl-tRNA(Gln) amidotransferase subunit A (484 aa).

Active-site charge relay system residues include Lys78 and Ser153. Catalysis depends on Ser177, which acts as the Acyl-ester intermediate.

Belongs to the amidase family. GatA subfamily. In terms of assembly, heterotrimer of A, B and C subunits.

It catalyses the reaction L-glutamyl-tRNA(Gln) + L-glutamine + ATP + H2O = L-glutaminyl-tRNA(Gln) + L-glutamate + ADP + phosphate + H(+). Allows the formation of correctly charged Gln-tRNA(Gln) through the transamidation of misacylated Glu-tRNA(Gln) in organisms which lack glutaminyl-tRNA synthetase. The reaction takes place in the presence of glutamine and ATP through an activated gamma-phospho-Glu-tRNA(Gln). This Thermodesulfovibrio yellowstonii (strain ATCC 51303 / DSM 11347 / YP87) protein is Glutamyl-tRNA(Gln) amidotransferase subunit A.